A 327-amino-acid chain; its full sequence is Ribosomal RNA small subunit methyltransferase H (327 aa).

S-adenosyl-L-methionine is bound by residues 37-39 (GGY), D55, F82, D99, and Q106. The interval 303–327 (IATRTDAPAQPVAPETLGLPQLEGF) is disordered.

This sequence belongs to the methyltransferase superfamily. RsmH family.

It localises to the cytoplasm. The catalysed reaction is cytidine(1402) in 16S rRNA + S-adenosyl-L-methionine = N(4)-methylcytidine(1402) in 16S rRNA + S-adenosyl-L-homocysteine + H(+). Its function is as follows. Specifically methylates the N4 position of cytidine in position 1402 (C1402) of 16S rRNA. In Jannaschia sp. (strain CCS1), this protein is Ribosomal RNA small subunit methyltransferase H.